A 706-amino-acid chain; its full sequence is Polyribonucleotide nucleotidyltransferase (706 aa).

2 residues coordinate Mg(2+): aspartate 483 and aspartate 489. Positions 550–609 (PRITTIWVKTDKIRDVIGTGGKNIRNITETTGVTVDIEDTGRINIASTSKEACDLAIQMI) constitute a KH domain. The S1 motif domain maps to 619–687 (GKLYMGIVKK…KNGKVKLSRK (69 aa)).

Belongs to the polyribonucleotide nucleotidyltransferase family. Mg(2+) is required as a cofactor.

The protein resides in the cytoplasm. It catalyses the reaction RNA(n+1) + phosphate = RNA(n) + a ribonucleoside 5'-diphosphate. Functionally, involved in mRNA degradation. Catalyzes the phosphorolysis of single-stranded polyribonucleotides processively in the 3'- to 5'-direction. This chain is Polyribonucleotide nucleotidyltransferase, found in Pelobacter propionicus (strain DSM 2379 / NBRC 103807 / OttBd1).